Consider the following 319-residue polypeptide: MAPQRRAATKAPEGNGAAERRNRSSTKKDRAPREVQRLWQRPWLRTAGLGAGFVLTALLLWSSLGADDGVAEVLARRGEVVAGRFIEVPCSEDYDSHRRFEGCTPRKCGRGVTDVVITREEAERIRSVAEKGLSLGGSDGGASILDLHSGALSVGKHFVNLYRYFGDKIQNIFSEEDFRLYREVRQKVQLTIAEAFGISASSLHLTKPTFFSRINSTEARTAHDEYWHAHVDKVTYGSFDYTSLLYLSNYLEDFGGGRFMFMEEGANKTVEPRAGRVSFFTSGSENLHRVEKVHWGTRYAITIAFSCNPDHGIEDPAFP.

The tract at residues 1–34 (MAPQRRAATKAPEGNGAAERRNRSSTKKDRAPRE) is disordered. Residues 1–42 (MAPQRRAATKAPEGNGAAERRNRSSTKKDRAPREVQRLWQRP) lie on the Cytoplasmic side of the membrane. The segment covering 18 to 34 (AERRNRSSTKKDRAPRE) has biased composition (basic and acidic residues). The chain crosses the membrane as a helical; Signal-anchor for type II membrane protein span at residues 43-65 (WLRTAGLGAGFVLTALLLWSSLG). Residues 66–319 (ADDGVAEVLA…DHGIEDPAFP (254 aa)) are Lumenal-facing. The 103-residue stretch at 207-309 (KPTFFSRINS…AITIAFSCNP (103 aa)) folds into the Fe2OG dioxygenase domain. N-linked (GlcNAc...) asparagine glycosylation occurs at N215. H230, D232, and H288 together coordinate Fe cation. The active site involves R298. R298 contributes to the 2-oxoglutarate binding site.

It belongs to the OGFOD3 family. Requires Fe(2+) as cofactor. The cofactor is L-ascorbate.

Its subcellular location is the membrane. The chain is 2-oxoglutarate and iron-dependent oxygenase domain-containing protein 3 (OGFOD3) from Homo sapiens (Human).